Here is a 95-residue protein sequence, read N- to C-terminus: uncharacterized protein (95 aa).

Residues 45-65 traverse the membrane as a helical segment; it reads WLSGLAFVLQAALVMPVVLAF.

The protein localises to the membrane. This is an uncharacterized protein from Mycobacterium leprae (strain TN).